We begin with the raw amino-acid sequence, 165 residues long: Methylated-DNA--protein-cysteine methyltransferase (165 aa).

Residue C126 is the Nucleophile; methyl group acceptor of the active site.

This sequence belongs to the MGMT family.

It localises to the cytoplasm. It catalyses the reaction a 6-O-methyl-2'-deoxyguanosine in DNA + L-cysteinyl-[protein] = S-methyl-L-cysteinyl-[protein] + a 2'-deoxyguanosine in DNA. The enzyme catalyses a 4-O-methyl-thymidine in DNA + L-cysteinyl-[protein] = a thymidine in DNA + S-methyl-L-cysteinyl-[protein]. Involved in the cellular defense against the biological effects of O6-methylguanine (O6-MeG) and O4-methylthymine (O4-MeT) in DNA. Repairs the methylated nucleobase in DNA by stoichiometrically transferring the methyl group to a cysteine residue in the enzyme. This is a suicide reaction: the enzyme is irreversibly inactivated. The polypeptide is Methylated-DNA--protein-cysteine methyltransferase (Mycobacterium bovis (strain ATCC BAA-935 / AF2122/97)).